The following is a 1633-amino-acid chain: MTSILWLFSLAVLWHMGQPQPAELYPSVDPNHFGADGNPCYDRATRQPQRCVPDFVNAAFNLEVQVTNTCGTKRPTKFCVQSGHTGQRSVCETCDDRHEGFSHPAKYLTDFNVGNNETWWQSDTMQEGQQYPTTTNLTLVLGKSFDITYVRLKFISPRPESFTIYKKTHTDSEWEPWQFYSGSCRATYGLSDRAPILPGNEATAQCTKEFSDISPITGGNIAFSTLEGRPSAHAFEESEVLQKWVTASAIRISLNRMNTFGDEVFKDPQVLRSYYYAISDFAVGGRCKCNGHASECVGSSSVDGENRLVCRCEHNTQGADCNECLPFYNDRPWRSGTSVEANECIACNCSQLSNRCYFDQQLFEETGHGGHCIDCQGNTQGVHCEQCIANHWRRPGENYCVACGCNEIGSLSTQCDNEGKCQCKPGVTGRFCDQCLDGFYDFSTNGCKNCGCETSGSLNNQPRCDSSSGSCSCKLNVEGRQCDKCKPGYFDLSTENQFGCTPCFCFGHSSICNTADGYFAMNVSSVFDQDKQKWAGQNRIGLQDTQWAELDKAVAVSDTDNSPVYFVAPEQFLGDQRSSYNQDLVFTLKVAKHVTNQDVKDIIIVGADRQELSTSITAQGNPFPTTEAQTYRFRVHADPYFGWYPRINELDFIGILSNITAIKIRGTYSYKDIGYLSNVNLGTAGVAPSAANPKQATWIEHCECLPGFVGQFCESCESGFRRETKFGGPFNHCIKCDCHNHSNSCEAESGSCICEHNTAGDTCERCARGYYGDALQGTEEDCQKCPCPNDGPCILHADGDVICTECPNGYTGRRCDECSDGYFGNPKDGTECVECACSGNTDPNSIGNCDKITGECKKCIFNTHGFNCENCKPGYWGDALIEPKGNCQSCGCFAAGTRRPNNDYTLLECNQQDGQCDCLPNVIGIQCDQCAHGFYNITSGLGCQECNCDPLGSEGNTCDVNTGQCQCKPGVTGQRCDRCADYHFGFSANGCQPCDCEYIGSENQQCDVNSGQCLCKENVEGRRCDQCAENRYGITQGCLPCDDCYTLIQSRVNVFREKVKSLDNTLQEIIENPAPVNDTKFDEKVKETSRAASEVWEAVKQKTKEGGGTIKTKSKAIKDEIVAALEKLTSIDESVAQAKVGADAAENDMKRWEIIIENARREIENVLHYLETEGEERAQIAYNASQKYGEQSKRMSELASGTREEAEKHLKQASEIEQLSEQAIANATQANKEASDAIYGGEQISKQIAELKEKQNQLNESIHRTLDLAEEQKKSADEANNLAAVSLTNVEAVKIPSVDPKELRNDVAGVLEESENLVDSSVKENSANDELFDEVNRSVADARNELQSSQDQQRVSDQLMLELEKSRERIVDSVSTADKTLKDAEAALQVLEEFGAKIEKSRNDAVAEFAGVEGINQRLDDIIDAQDKRRNSLPIDKQFVIDYRKSADVLLNETHALADRYKDIIHSDVDTRDSTEAVQYDIEQLMEELTDSNENLQYYKKQAEDDKQMATEAVRKATLAKNSAIEANATILAEEDEIKKIINSLDTMEEVNNAELDELEEEIDRLDQLLAQAQLAKEVPTYQQYRADEDVKVAQLKNDISELQKEVLNLEEIRDNLPTKCFNVINLEQEGQK.

The first 19 residues, 1 to 19, serve as a signal peptide directing secretion; it reads MTSILWLFSLAVLWHMGQP. The Laminin N-terminal domain occupies 47-286; sequence QPQRCVPDFV…AISDFAVGGR (240 aa). Residues N116 and N136 are each glycosylated (N-linked (GlcNAc...) asparagine). Intrachain disulfides connect C287/C296, C289/C310, C312/C321, C324/C344, C347/C356, C349/C372, C375/C384, C387/C400, C403/C415, C405/C421, C423/C432, C435/C447, C450/C464, C452/C471, C473/C482, and C485/C500. Laminin EGF-like domains are found at residues 287-346, 347-402, 403-449, and 450-502; these read CKCN…ECIA, CNCS…YCVA, CGCN…GCKN, and CGCE…GCTP. A glycan (N-linked (GlcNAc...) asparagine) is linked at N348. Residues 503–512 form the Laminin EGF-like 5; first part domain; the sequence is CFCFGHSSIC. 3 N-linked (GlcNAc...) asparagine glycosylation sites follow: N522, N658, and N740. Residues 529 to 701 form the Laminin IV type A domain; that stretch reads QDKQKWAGQN…NPKQATWIEH (173 aa). One can recognise a Laminin EGF-like 5; second part domain in the interval 702–747; the sequence is CECLPGFVGQFCESCESGFRRETKFGGPFNHCIKCDCHNHSNSCEA. 23 cysteine pairs are disulfide-bonded: C736–C745, C738–C752, C754–C763, C766–C782, C785–C803, C806–C815, C818–C832, C835–C849, C837–C856, C859–C868, C871–C887, C890–C909, C892–C916, C918–C927, C930–C943, C946–C958, C948–C965, C967–C976, C979–C991, C994–C1006, C996–C1013, C1015–C1024, and C1027–C1038. A Laminin EGF-like 6; truncated domain is found at 752-784; it reads CICEHNTAGDTCERCARGYYGDALQGTEEDCQK. Laminin EGF-like domains follow at residues 785–834, 835–889, 890–945, 946–993, and 994–1040; these read CPCP…ECVE, CACS…NCQS, CGCF…GCQE, CNCD…GCQP, and CDCE…GCLP. N-linked (GlcNAc...) asparagine glycosylation is present at N936. N1077, N1183, N1226, N1259, N1336, N1452, and N1528 each carry an N-linked (GlcNAc...) asparagine glycan.

Functionally, during the formation of neuromuscular junctions at the larval stage, negatively regulates membrane protrusion from body wall muscles, probably downstream of the integrin complex formed by pat-2 and pat-3. The chain is Laminin-like protein lam-2 (lam-2) from Caenorhabditis elegans.